Here is a 104-residue protein sequence, read N- to C-terminus: L-rhamnose mutarotase (104 aa).

Tyr18 is a binding site for substrate. His22 serves as the catalytic Proton donor. Substrate contacts are provided by residues Tyr41 and 76-77 (WW).

The protein belongs to the rhamnose mutarotase family. Homodimer.

The protein resides in the cytoplasm. It catalyses the reaction alpha-L-rhamnose = beta-L-rhamnose. It functions in the pathway carbohydrate metabolism; L-rhamnose metabolism. In terms of biological role, involved in the anomeric conversion of L-rhamnose. This chain is L-rhamnose mutarotase, found in Shigella dysenteriae serotype 1 (strain Sd197).